The following is a 325-amino-acid chain: tRNA U34 carboxymethyltransferase (325 aa).

Residues Lys91, Trp105, Lys110, Gly130, 152-154 (DPS), Met196, Tyr200, and Arg315 contribute to the carboxy-S-adenosyl-L-methionine site.

Belongs to the class I-like SAM-binding methyltransferase superfamily. CmoB family. Homotetramer.

The catalysed reaction is carboxy-S-adenosyl-L-methionine + 5-hydroxyuridine(34) in tRNA = 5-carboxymethoxyuridine(34) in tRNA + S-adenosyl-L-homocysteine + H(+). Functionally, catalyzes carboxymethyl transfer from carboxy-S-adenosyl-L-methionine (Cx-SAM) to 5-hydroxyuridine (ho5U) to form 5-carboxymethoxyuridine (cmo5U) at position 34 in tRNAs. This chain is tRNA U34 carboxymethyltransferase, found in Aeromonas salmonicida (strain A449).